We begin with the raw amino-acid sequence, 208 residues long: Imidazoleglycerol-phosphate dehydratase (208 aa).

This sequence belongs to the imidazoleglycerol-phosphate dehydratase family.

It is found in the cytoplasm. The enzyme catalyses D-erythro-1-(imidazol-4-yl)glycerol 3-phosphate = 3-(imidazol-4-yl)-2-oxopropyl phosphate + H2O. It participates in amino-acid biosynthesis; L-histidine biosynthesis; L-histidine from 5-phospho-alpha-D-ribose 1-diphosphate: step 6/9. The polypeptide is Imidazoleglycerol-phosphate dehydratase (Anaeromyxobacter dehalogenans (strain 2CP-1 / ATCC BAA-258)).